Here is a 372-residue protein sequence, read N- to C-terminus: MSTKSKIFLVLLVFCPLSFAAHWLGWGETTVFILAGLAIVPLAAFMGTATEEIAVVIGPNAGGLLNATFGNATELILAYIALKEGLIEVVKATLTGSIIGNLLLVMGFAVFLGGLRYKEQNFQPLAARLNASTMNLGVVAILLPTALQYTSTGVEETVLQNLSVAVAVVLIGVYLLSLVFSMGTHAYLYDVGVAENMEMPELGEDVSEPEPPTEEEKPNLWLWTGVLLVVTLGVAVESELLVGSLEVATESLGLTALFTGVIVLPIIGNAAEHATAVTVAMKDKMDLSMSVVMGSSLQIAFFVAPVLVIVGWAIGQPMDLNFNPFELVAVLVAVLIVNSISSDGTSNWLEGILLLATYAIVALAFFFHPTLV.

11 helical membrane passes run 7-27 (IFLVLLVFCPLSFAAHWLGWG), 29-49 (TTVFILAGLAIVPLAAFMGTA), 62-82 (GGLLNATFGNATELILAYIAL), 94-114 (LTGSIIGNLLLVMGFAVFLGG), 134-154 (MNLGVVAILLPTALQYTSTGV), 162-182 (LSVAVAVVLIGVYLLSLVFSM), 222-242 (LWTGVLLVVTLGVAVESELLV), 251-271 (SLGLTALFTGVIVLPIIGNAA), 294-314 (GSSLQIAFFVAPVLVIVGWAI), 320-340 (LNFNPFELVAVLVAVLIVNSI), and 352-372 (ILLLATYAIVALAFFFHPTLV).

Belongs to the Ca(2+):cation antiporter (CaCA) (TC 2.A.19) family. Cation/proton exchanger (CAX) subfamily.

The protein localises to the cell inner membrane. Functionally, ca(+)/H(+) antiporter that extrudes calcium in exchange for external protons. Plays an important role in salt tolerance. Does not transport sodium or lithium. This is Ca(2+)/H(+) antiporter from Synechocystis sp. (strain ATCC 27184 / PCC 6803 / Kazusa).